We begin with the raw amino-acid sequence, 145 residues long: NADH-quinone oxidoreductase subunit A 1 (145 aa).

3 helical membrane-spanning segments follow: residues 18 to 38 (ILPL…LLLA), 71 to 91 (VPFY…VFIF), and 104 to 124 (GLIH…WLWL).

This sequence belongs to the complex I subunit 3 family. NDH-1 is composed of 14 different subunits. Subunits NuoA, H, J, K, L, M, N constitute the membrane sector of the complex.

It is found in the cell inner membrane. It carries out the reaction a quinone + NADH + 5 H(+)(in) = a quinol + NAD(+) + 4 H(+)(out). In terms of biological role, NDH-1 shuttles electrons from NADH, via FMN and iron-sulfur (Fe-S) centers, to quinones in the respiratory chain. The immediate electron acceptor for the enzyme in this species is believed to be ubiquinone. Couples the redox reaction to proton translocation (for every two electrons transferred, four hydrogen ions are translocated across the cytoplasmic membrane), and thus conserves the redox energy in a proton gradient. The sequence is that of NADH-quinone oxidoreductase subunit A 1 from Geotalea uraniireducens (strain Rf4) (Geobacter uraniireducens).